The primary structure comprises 251 residues: Probable phosphatase Sama_2233 (251 aa).

Residues H8, H10, H16, H41, E74, H102, H132, D193, and H195 each contribute to the Zn(2+) site.

Belongs to the PHP family. It depends on Zn(2+) as a cofactor.

In Shewanella amazonensis (strain ATCC BAA-1098 / SB2B), this protein is Probable phosphatase Sama_2233.